We begin with the raw amino-acid sequence, 1131 residues long: MSDQNNRSRNEYHSNRKNEPSYELQNAHSGLFHSSNEELTNRNQRYTNQNASMGSFTPVQSLQFPEQSQQTNMLYNGDDGNNNTINDNERDIYGGFVNHHRQRPPPATAEYNDVFNTNSQQLPSEHQYNNVPSYPLPSINVIQTTPELIHNGSQTMATPIERPFFNENDYYYNNRNSRTSPSIASSSDGYADQEARPILEQPNNNMNSGNIPQYHDQPFGYNNGYHGLQAKDYYDDPEGGYIDQRGDDYQINSYLGRNGEMVDPYDYENSLRHMTPMERREYLHDDSRPVNDGKEELDSVKSGYSHRDLGEYDKDDFSRDDEYDDLNTIDKLQFQANGVPASSSVSSIGSKESDIIVSNDNLTANRALKRSGTEIRKFKLWNGNFVFDSPISKTLLDQYATTTENANTLPNEFKFMRYQAVTCEPNQLAEKNFTVRQLKYLTPRETELMLVVTMYNEDHILLGRTLKGIMDNVKYMVKKKNSSTWGPDAWKKIVVCIISDGRSKINERSLALLSSLGCYQDGFAKDEINEKKVAMHVYEHTTMINITNISESEVSLECNQGTVPIQLLFCLKEQNQKKINSHRWAFEGFAELLRPNIVTLLDAGTMPGKDSIYQLWREFRNPNVGGACGEIRTDLGKRFVKLLNPLVASQNFEYKMSNILDKTTESNFGFITVLPGAFSAYRFEAVRGQPLQKYFYGEIMENEGFHFFSSNMYLAEDRILCFEVVTKKNCNWILKYCRSSYASTDVPERVPEFILQRRRWLNGSFFASVYSFCHFYRVWSSGHNIGRKLLLTVEFFYLFFNTLISWFSLSSFFLVFRILTVSIALAYHSAFNVLSVIFLWLYGICTLSTFILSLGNKPKSTEKFYVLTCVIFAVMMIYMIFCSIFMSVKSFQNILKNDTISFEGLITTEAFRDIVISLGSTYCLYLISSIIYLQPWHMLTSFIQYILLSPSYINVLNIYAFCNVHDLSWGTKGAMANPLGKINTTEDGTFKMEVLVSSSEIQANYDKYLKVLNDFDPKSESRPTEPSYDEKKTGYYANVRSLVIIFWVITNFIIVAVVLETGGIADYIAMKSISTDDTLETAKKAEIPLMTSKASIYFNVILWLVALSALIRFIGCSIYMIVRFFKKVTFR.

Over residues 1 to 20 (MSDQNNRSRNEYHSNRKNEP) the composition is skewed to basic and acidic residues. Residues 1-22 (MSDQNNRSRNEYHSNRKNEPSY) form a disordered region. Phosphoserine occurs at positions 34, 35, 270, 299, and 318. The tract at residues 282-305 (YLHDDSRPVNDGKEELDSVKSGYS) is disordered. Thr-328 carries the phosphothreonine modification. Phosphoserine is present on Ser-358. Transmembrane regions (helical) follow at residues 795 to 815 (FFYL…FFLV), 833 to 853 (VLSV…FILS), 866 to 886 (VLTC…SIFM), 914 to 934 (IVIS…IYLQ), 942 to 962 (FIQY…YAFC), 1042 to 1062 (LVII…LETG), and 1101 to 1121 (ILWL…IYMI).

The protein belongs to the chitin synthase family.

It localises to the cell membrane. It carries out the reaction [(1-&gt;4)-N-acetyl-beta-D-glucosaminyl](n) + UDP-N-acetyl-alpha-D-glucosamine = [(1-&gt;4)-N-acetyl-beta-D-glucosaminyl](n+1) + UDP + H(+). Requires proteolytic activation. Polymerizes chitin, a structural polymer of the cell wall and septum, by transferring the sugar moiety of UDP-GlcNAc to the non-reducing end of the growing chitin polymer. Required for mitotic division septum formation during adverse conditions. The sequence is that of Chitin synthase 1 (CHS1) from Saccharomyces cerevisiae (strain ATCC 204508 / S288c) (Baker's yeast).